The sequence spans 466 residues: Benzoate transport protein (466 aa).

Over 1–22 (MSREINVNQMIDDSKLTPFHWR) the chain is Cytoplasmic. A helical membrane pass occupies residues 23 to 43 (VIILSTLIIIFDGYDLVIYGV). Topologically, residues 44-60 (ALPLLMKEWAIDPVTAG) are periplasmic. The helical transmembrane segment at 61-81 (FIGSIALFGMMFGALIFGTIA) threads the bilayer. Over 82 to 93 (DKLEHLGVSRKK) the chain is Cytoplasmic. A helical transmembrane segment spans residues 94-114 (VIAVCIILFSLCTVLCGFSET). The Periplasmic segment spans residues 115–119 (TTQFS). A helical membrane pass occupies residues 120–140 (IFRFLAGVGIGGVMPNVIALV). Residues 141–150 (SEYAPKKFKS) lie on the Cytoplasmic side of the membrane. A helical transmembrane segment spans residues 151–171 (FFVTLMFSGYAIGGMTAAFLG). The Periplasmic segment spans residues 172-181 (SILVPLYGWK). A helical membrane pass occupies residues 182–202 (IMFMIAGIPLVLLLPLMKVLP). The Cytoplasmic segment spans residues 203–258 (ESIDYLVRKKKDETVRFIMTKMVPSYQYQPDHVFVLNSSNQNQAQAPVKMIFQEQR). The chain crosses the membrane as a helical span at residues 259 to 279 (AFSTMMFWCSIFMTLIMVYAL). Residues 280–297 (GNWLPKLMIEAGYNLSKS) are Periplasmic-facing. A helical transmembrane segment spans residues 298-318 (LIFLFSLNVGGMIGSILGGYL). Topologically, residues 319 to 325 (ADRYNVK) are cytoplasmic. The chain crosses the membrane as a helical span at residues 326 to 346 (FVTMGLLLLGAISLSLLSFQF). The Periplasmic portion of the chain corresponds to 347 to 348 (SS). A helical membrane pass occupies residues 349 to 369 (VILYILIACAGAASIGAQIML). At 370 to 387 (LAYMAKFYAPNVRSTGIG) the chain is on the cytoplasmic side. A helical transmembrane segment spans residues 388–408 (WGLGMGRVGAILGPILTGWLL). Residues 409–414 (SLQLPH) are Periplasmic-facing. A helical membrane pass occupies residues 415-435 (FYNFLALSIPAVLGIVTVFLI). At 436–466 (NDRRMYQPEPISPIANQNDTTTVKVNEAVSH) the chain is on the cytoplasmic side.

Belongs to the major facilitator superfamily. Aromatic acid:H(+) symporter (AAHS) (TC 2.A.1.15) family.

It is found in the cell inner membrane. Functionally, probable uptake of benzoate. In Acinetobacter baylyi (strain ATCC 33305 / BD413 / ADP1), this protein is Benzoate transport protein (benK).